We begin with the raw amino-acid sequence, 295 residues long: Urease accessory protein UreD (295 aa).

This sequence belongs to the UreD family. UreD, UreF and UreG form a complex that acts as a GTP-hydrolysis-dependent molecular chaperone, activating the urease apoprotein by helping to assemble the nickel containing metallocenter of UreC. The UreE protein probably delivers the nickel.

Its subcellular location is the cytoplasm. In terms of biological role, required for maturation of urease via the functional incorporation of the urease nickel metallocenter. This is Urease accessory protein UreD from Ralstonia nicotianae (strain ATCC BAA-1114 / GMI1000) (Ralstonia solanacearum).